We begin with the raw amino-acid sequence, 1179 residues long: Protein FAM83H (1179 aa).

The tract at residues 1-286 (MARRSQSSSQ…LFAQSEPLVP (286 aa)) is DUF1669. Residues 1 to 286 (MARRSQSSSQ…LFAQSEPLVP (286 aa)) form a mediates interaction with CSNK1A1 and is required for FAM83H activity in keratin cytoskeleton organization region. Residue threonine 465 is modified to Phosphothreonine. Disordered regions lie at residues 484–577 (ADPD…GRAG) and 636–669 (FPTK…DSFR). Phosphoserine occurs at positions 513, 514, 516, 523, 647, and 667. Phosphothreonine is present on threonine 756. Serine 759, serine 785, and serine 813 each carry phosphoserine. The tract at residues 830–1026 (RLPSRFLSAQ…RGPRARLSSA (197 aa)) is disordered. A compositionally biased stretch (polar residues) spans 836-847 (LSAQSHSTSPQG). Residues serine 870 and serine 881 each carry the phosphoserine modification. Threonine 883 carries the phosphothreonine modification. Polar residues predominate over residues 884-906 (PGFSTRRGSPTTGFIEQKGSPTS). At serine 892 the chain carries Phosphoserine. Threonine 894 is subject to Phosphothreonine. A phosphoserine mark is found at serine 903, serine 914, serine 925, serine 936, serine 945, serine 1003, serine 1009, serine 1024, and serine 1025. The residue at position 1040 (threonine 1040) is a Phosphothreonine. 2 disordered regions span residues 1047 to 1084 (ISAH…APDM) and 1143 to 1165 (EEAS…SKVG). Serine 1048, serine 1068, and serine 1147 each carry phosphoserine.

The protein belongs to the FAM83 family. As to quaternary structure, directly interacts (via DUF1669) with casein kinase isoforms CSNK1A1, CSNK1A1L, CSNK1D and CSNK1E. Interaction with CSNK1A1 recruits CSNK1A1 to keratin filaments. Interacts with KRT18 and probably other keratins. As to expression, expressed in the tooth follicle.

The protein localises to the cytoplasm. It is found in the cytoskeleton. May play a major role in the structural organization and calcification of developing enamel. May play a role in keratin cytoskeleton disassembly by recruiting CSNK1A1 to keratin filaments. Thereby, it may regulate epithelial cell migration. In Homo sapiens (Human), this protein is Protein FAM83H.